Here is a 109-residue protein sequence, read N- to C-terminus: A-type ATP synthase subunit F (109 aa).

This sequence belongs to the V-ATPase F subunit family. In terms of assembly, has multiple subunits with at least A(3), B(3), C, D, E, F, H, I and proteolipid K(x).

The protein resides in the cell membrane. In terms of biological role, component of the A-type ATP synthase that produces ATP from ADP in the presence of a proton gradient across the membrane. The protein is A-type ATP synthase subunit F of Halorubrum lacusprofundi (strain ATCC 49239 / DSM 5036 / JCM 8891 / ACAM 34).